The sequence spans 230 residues: Sperm-associated antigen 7 homolog (230 aa).

A disordered region spans residues 1–45; it reads MADLLGSILSSMEKPPTVHDQESRRKAREQAARLKKLEEDERRKK. The segment covering 16–45 has biased composition (basic and acidic residues); the sequence is PTVHDQESRRKAREQAARLKKLEEDERRKK. Positions 46 to 109 constitute an R3H domain; it reads AEFRKKMEKE…ESRYVMLFKK (64 aa). Basic and acidic residues predominate over residues 119-144; that stretch reads EAYRKGEEWDPQKAEERRRLKEKAAL. Disordered regions lie at residues 119 to 169 and 185 to 230; these read EAYR…KYSH and ANRA…GSSV. Ser158 is subject to Phosphoserine. Over residues 196–211 the composition is skewed to basic and acidic residues; that stretch reads NKRDTRSIEEAMNEIR.

This chain is Sperm-associated antigen 7 homolog (spag7), found in Danio rerio (Zebrafish).